The following is a 155-amino-acid chain: Regulatory protein RecX (155 aa).

The protein belongs to the RecX family.

The protein resides in the cytoplasm. Functionally, modulates RecA activity. The polypeptide is Regulatory protein RecX (Pseudomonas entomophila (strain L48)).